Reading from the N-terminus, the 191-residue chain is Small ribosomal subunit protein uS5 (191 aa).

The 64-residue stretch at 21–84 (LVDKLVTINR…ERAKRTMIRV (64 aa)) folds into the S5 DRBM domain. The tract at residues 161-191 (PRHVASRRGKKAAELFGKREQGQTEAEVTNG) is disordered. Residues 171 to 182 (KAAELFGKREQG) are compositionally biased toward basic and acidic residues.

The protein belongs to the universal ribosomal protein uS5 family. As to quaternary structure, part of the 30S ribosomal subunit. Contacts proteins S4 and S8.

With S4 and S12 plays an important role in translational accuracy. Its function is as follows. Located at the back of the 30S subunit body where it stabilizes the conformation of the head with respect to the body. The polypeptide is Small ribosomal subunit protein uS5 (Gluconobacter oxydans (strain 621H) (Gluconobacter suboxydans)).